Reading from the N-terminus, the 185-residue chain is Large ribosomal subunit protein uL16m (185 aa).

It belongs to the universal ribosomal protein uL16 family.

The protein localises to the mitochondrion. This chain is Large ribosomal subunit protein uL16m (RPL16), found in Oryza sativa subsp. japonica (Rice).